Reading from the N-terminus, the 323-residue chain is tRNA U34 carboxymethyltransferase (323 aa).

Residues lysine 93, tryptophan 107, lysine 112, glycine 132, aspartate 154 to serine 156, valine 182 to glutamate 183, methionine 197, tyrosine 201, and arginine 316 each bind carboxy-S-adenosyl-L-methionine.

This sequence belongs to the class I-like SAM-binding methyltransferase superfamily. CmoB family. As to quaternary structure, homotetramer.

The catalysed reaction is carboxy-S-adenosyl-L-methionine + 5-hydroxyuridine(34) in tRNA = 5-carboxymethoxyuridine(34) in tRNA + S-adenosyl-L-homocysteine + H(+). Functionally, catalyzes carboxymethyl transfer from carboxy-S-adenosyl-L-methionine (Cx-SAM) to 5-hydroxyuridine (ho5U) to form 5-carboxymethoxyuridine (cmo5U) at position 34 in tRNAs. The sequence is that of tRNA U34 carboxymethyltransferase from Pseudoalteromonas atlantica (strain T6c / ATCC BAA-1087).